Here is a 322-residue protein sequence, read N- to C-terminus: Olfactory receptor 11L1 (322 aa).

At 1–25 (MEPQNTSTVTNFQLLGFQNLLEWQA) the chain is on the extracellular side. N-linked (GlcNAc...) asparagine glycosylation occurs at Asn-5. Residues 26–46 (LLFVIFLLIYCLTIIGNVVII) traverse the membrane as a helical segment. Over 47–54 (TVVSQGLR) the chain is Cytoplasmic. A helical membrane pass occupies residues 55-75 (LHSPMYMFLQHLSFLEVWYTS). The Extracellular portion of the chain corresponds to 76-99 (TTVPLLLANLLSWGQAISFSACMA). Cys-97 and Cys-189 are joined by a disulfide. Residues 100–120 (QLYFFVFLGATECFLLAFMAY) form a helical membrane-spanning segment. Residues 121–139 (DRYLAICSPLRYPFLMHRG) lie on the Cytoplasmic side of the membrane. Residues 140-160 (LCARLVVVSWCTGVSTGFLPS) form a helical membrane-spanning segment. The Extracellular segment spans residues 161-197 (LMISRLDFCGRNQINHFFCDLPPLMQLSCSRVYITEV). Residues 198–217 (TIFILSIAVLCICFFLTLGP) traverse the membrane as a helical segment. Topologically, residues 218-237 (YVFIVSSILRIPSTSGRRKT) are cytoplasmic. The helical transmembrane segment at 238–258 (FSTCGSHLAVVTLYYGTMISM) threads the bilayer. Residues 259 to 271 (YVCPSPHLLPEIN) lie on the Extracellular side of the membrane. Residues 272-292 (KIISVFYTVVTPLLNPVIYSL) traverse the membrane as a helical segment. The Cytoplasmic segment spans residues 293 to 322 (RNKDFKEAVRKVMRRKCGILWSTSKRKFLY).

It belongs to the G-protein coupled receptor 1 family.

It is found in the cell membrane. Functionally, odorant receptor. The sequence is that of Olfactory receptor 11L1 (OR11L1) from Homo sapiens (Human).